Consider the following 128-residue polypeptide: Large ribosomal subunit protein bL12c (128 aa).

This sequence belongs to the bacterial ribosomal protein bL12 family. In terms of assembly, homodimer. Part of the ribosomal stalk of the 50S ribosomal subunit. Forms a multimeric L10(L12)X complex, where L10 forms an elongated spine to which 2 to 4 L12 dimers bind in a sequential fashion. Binds GTP-bound translation factors.

The protein localises to the plastid. It localises to the chloroplast. Functionally, forms part of the ribosomal stalk which helps the ribosome interact with GTP-bound translation factors. Is thus essential for accurate translation. This chain is Large ribosomal subunit protein bL12c, found in Phaeodactylum tricornutum (strain CCAP 1055/1).